The following is a 62-amino-acid chain: Neurotoxin 3 (62 aa).

Residues 1–16 (LECHDQQSSQTPTTTG) are compositionally biased toward polar residues. Residues 1–22 (LECHDQQSSQTPTTTGCSGGET) are disordered. 4 disulfides stabilise this stretch: Cys-3-Cys-24, Cys-17-Cys-41, Cys-43-Cys-54, and Cys-55-Cys-60.

It belongs to the three-finger toxin family. Short-chain subfamily. Type I alpha-neurotoxin sub-subfamily. Expressed by the venom gland.

The protein resides in the secreted. Its function is as follows. Binds to muscle nicotinic acetylcholine receptor (nAChR) and inhibit acetylcholine from binding to the receptor, thereby impairing neuromuscular transmission. This Naja sputatrix (Malayan spitting cobra) protein is Neurotoxin 3.